The sequence spans 568 residues: Pentatricopeptide repeat-containing protein At1g73400, mitochondrial (568 aa).

Residues 1 to 55 constitute a mitochondrion transit peptide; sequence MMRRLVSYFVRSRFSLHLSTTPPQRSALFSHILSSHLDSIQINKKISSFSVHRFC. PPR repeat units lie at residues 233–263, 267–301, 302–336, 340–374, 375–409, 410–444, 445–479, and 480–514; these read EINA…MRHR, DANT…GHKP, ENFT…GSAV, TAKT…GCLP, DVST…GYPP, DIVT…RCAP, SVQT…DCVQ, and DVET…GLKL.

This sequence belongs to the PPR family. P subfamily.

It localises to the mitochondrion. The sequence is that of Pentatricopeptide repeat-containing protein At1g73400, mitochondrial from Arabidopsis thaliana (Mouse-ear cress).